Consider the following 376-residue polypeptide: WW domain-binding protein 4 (376 aa).

Residues 11 to 42 (KFCDYCKCWIADNRPSVEFHERGKNHKENVAR) form a Matrin-type zinc finger. The segment covering 94 to 111 (PTVSPVISTVQPTPTSNQ) has biased composition (polar residues). Disordered stretches follow at residues 94–127 (PTVS…ASKG) and 192–324 (WEKP…ECLS). Positions 114–123 (EKKKKKKKKE) are enriched in basic residues. 2 WW domains span residues 123–156 (EASK…KPEG) and 164–197 (TAAK…KPED). Positions 219-272 (EDAKSSDSHSDSEGEQKKAGEASTETKKLIIKFKEKNKSTEKRIGPEIQKEKST) are enriched in basic and acidic residues. 2 positions are modified to phosphoserine: serine 228 and serine 230. An interaction with SNRNP200 region spans residues 357–375 (KKRRLENGKSRNLRQRGDD).

Component of the spliceosome B complex. Associated with U2 snRNPs. Binds splicing factors SNRPB, SNRPC and SF1. Interacts via the WW domains with the Pro-rich domains of KHDRBS1/SAM68. Interacts via the WW domains with the Pro-rich domains of WBP11. Interacts with SNRNP200.

The protein resides in the nucleus. It localises to the nucleus speckle. Its function is as follows. Involved in pre-mRNA splicing as a component of the spliceosome. May play a role in cross-intron bridging of U1 and U2 snRNPs in the mammalian A complex. The chain is WW domain-binding protein 4 (Wbp4) from Mus musculus (Mouse).